We begin with the raw amino-acid sequence, 748 residues long: Cysteine--tRNA ligase, cytoplasmic (748 aa).

Residues 1-25 form a disordered region; sequence MADSSGQQGKGRRVQPQWSPPAGTQ. Alanine 2 bears the N-acetylalanine mark. Serine 19 carries the phosphoserine modification. Cysteine 55 provides a ligand contact to Zn(2+). Glycine 56 lines the L-cysteine pocket. Positions 57 to 67 match the 'HIGH' region motif; that stretch reads PTVYDASHMGH. Arginine 79 bears the Phosphoserine mark. An L-cysteine-binding site is contributed by threonine 96. Residues 101 to 104 carry the 'KIIK' region motif; that stretch reads KIIK. Residues serine 305 and serine 307 each carry the phosphoserine modification. Zn(2+) contacts are provided by cysteine 348, histidine 373, and glutamate 377. Histidine 373 serves as a coordination point for L-cysteine. The short motif at 406–410 is the 'KMSKS' region element; the sequence is KMSKS. Lysine 409 provides a ligand contact to ATP. Lysine 503 is modified (N6-acetyllysine). Residues 653–679 show a composition bias toward basic and acidic residues; the sequence is EKRRVEEEKRKKKEEAARRKQEQEAAK. Residues 653-686 are disordered; sequence EKRRVEEEKRKKKEEAARRKQEQEAAKLAKMKIP. Residue serine 746 is modified to Phosphoserine.

It belongs to the class-I aminoacyl-tRNA synthetase family. Homodimer. Zn(2+) serves as cofactor.

The protein resides in the cytoplasm. It carries out the reaction tRNA(Cys) + L-cysteine + ATP = L-cysteinyl-tRNA(Cys) + AMP + diphosphate. In terms of biological role, catalyzes the ATP-dependent ligation of cysteine to tRNA(Cys). This Homo sapiens (Human) protein is Cysteine--tRNA ligase, cytoplasmic.